A 415-amino-acid chain; its full sequence is MKGSYKSRWVIVIVVVIAAIAAFWFWQGRNDSQSAAPGATKQAQQSPAGGRRGMRSGPLAPVQAATAVEQAVPRYLTGLGTITAANTVTVRSRVDGQLMALHFQEGQQVKAGDLLAEIDPSQFKVALAQAQGQLAKDKATLTNARRDLARYQQLAKTNLVSRQELDAQQALVSETEGTIKADEASVASAQLQLDWSRITAPVDGRVGLKQVDVGNQISSGDTTGIVVITQTHPIDLLFTLPESDIATVVQAQKAGKPLVVEAWDRTNSKKLSEGTLLSLDNQIDATTGTIKVKARFNNQDDALFPNQFVNARMLVDTEQNAVVIPTAALQMGNEGHFVWVLNSENKVSKHLVTPGIQDSQKVVIRAGISAGDRVVTDGIDRLTEGAKVEVVEAQSATTPEEKATSREYAKKGARS.

A signal peptide spans 1–21 (MKGSYKSRWVIVIVVVIAAIA). The segment covering 31–47 (DSQSAAPGATKQAQQSP) has biased composition (polar residues). 2 disordered regions span residues 31–60 (DSQS…GPLA) and 392–415 (EAQS…GARS). Positions 399-415 (PEEKATSREYAKKGARS) are enriched in basic and acidic residues.

This sequence belongs to the membrane fusion protein (MFP) (TC 8.A.1) family. In terms of assembly, part of a tripartite efflux system composed of MdtA, MdtB and MdtC.

It localises to the cell inner membrane. The MdtABC tripartite complex confers resistance against novobiocin and deoxycholate. This is Multidrug resistance protein MdtA from Escherichia coli O157:H7.